Consider the following 269-residue polypeptide: Diaminopimelate epimerase (269 aa).

The substrate site is built by N15 and N66. The active-site Proton donor is C75. Residues 76–77, N152, N185, and 203–204 each bind substrate; these read GN and ER. C212 functions as the Proton acceptor in the catalytic mechanism. A substrate-binding site is contributed by 213 to 214; that stretch reads GT.

The protein belongs to the diaminopimelate epimerase family. As to quaternary structure, homodimer.

It localises to the cytoplasm. It carries out the reaction (2S,6S)-2,6-diaminopimelate = meso-2,6-diaminopimelate. It participates in amino-acid biosynthesis; L-lysine biosynthesis via DAP pathway; DL-2,6-diaminopimelate from LL-2,6-diaminopimelate: step 1/1. Its function is as follows. Catalyzes the stereoinversion of LL-2,6-diaminopimelate (L,L-DAP) to meso-diaminopimelate (meso-DAP), a precursor of L-lysine and an essential component of the bacterial peptidoglycan. The polypeptide is Diaminopimelate epimerase (Parabacteroides distasonis (strain ATCC 8503 / DSM 20701 / CIP 104284 / JCM 5825 / NCTC 11152)).